A 403-amino-acid chain; its full sequence is Na(+)/H(+) antiporter NhaH (403 aa).

The next 12 membrane-spanning stretches (helical) occupy residues 7–27 (VFIQ…IAKL), 34–54 (VALV…IEEA), 99–119 (LAFL…YFLL), 125–145 (VAFT…LSIF), 168–188 (IAVV…EMGW), 196–216 (FMFL…GYVF), 228–245 (LEVA…FIAE), 250–272 (SGVI…IGMS), 282–302 (FWDS…GLEI), 311–331 (WGYI…AVYI), 345–365 (ILIN…LSLP), and 373–393 (QVLL…GLTL).

It belongs to the monovalent cation:proton antiporter 1 (CPA1) transporter (TC 2.A.36) family.

It localises to the cell membrane. In terms of biological role, na(+)/H(+) antiporter that extrudes sodium in exchange for external protons. Can also transport lithium. This Halobacillus aidingensis protein is Na(+)/H(+) antiporter NhaH (nhaH).